A 425-amino-acid polypeptide reads, in one-letter code: TRAF family member-associated NF-kappa-B activator (425 aa).

M1 is subject to N-acetylmethionine. The interval M1 to Q31 is necessary for interaction with ZC3H12A. Positions D22 to L62 form a coiled coil. The interval D70 to E191 is necessary for interaction with TRAF6. Phosphoserine occurs at positions 126 and 129. The tract at residues H133 to A172 is interaction with TBK1 and IKBKE. The segment at A172–E191 is TRAF family member interaction. S178 and S208 each carry phosphoserine. Residue T213 is modified to Phosphothreonine. Phosphoserine is present on residues S225, S228, S341, S354, and S357. The UBZ1-type zinc-finger motif lies at P393–H420. 4 residues coordinate Zn(2+): C396, C399, H416, and H420.

As to quaternary structure, homodimer. Found in a deubiquitination complex with TANK, USP10 and ZC3H12A; this complex inhibits genotoxic stress- or interleukin-1-beta-mediated NF-kappaB activation by promoting IKBKG or TRAF6 deubiquitination. Interacts with IKBKG; this interaction increases in response to DNA damage. Interacts with TRAF6; this interaction increases in response to DNA damage and recruits USP10 to the ubiquitinated TRAF6. Interacts with USP10; this interaction increases in response to DNA damage. Interacts with ZC3H12A; this interaction increases in response to DNA damage. Interacts with TBK1. Interacts with IKBKE. Also interacts with TRAF1, TRAF2, and TRAF3 by binding to their TRAF-C domains; the interaction with TRAF2 is disrupted by the phosphorylation of TANK by IKBKE. Interacts more strongly with TRAF1 and TRAF2 than TRAF3. Interacts with IKBKG; the interaction is enhanced by IKBKE and TBK1. Part of a ternary complex consisting of TANK, IKBKB and IKBKG. In terms of assembly, (Microbial infection) Interacts with vaccinia virus protein C6. (Microbial infection) Interacts with Seneca Valley virus protease 3C; this interaction allows the cleavage of TANK and subsequent suppression of host innate immunity. Phosphorylated by IKBKE. In terms of processing, (Microbial infection) Cleaved by encephalomyocarditis virus (EMCV) protease 3C. This cleavage allows the virus to disrupt the TANK-TBK1-IKKepsilon-IRF3 complex, thereby inhibiting the induction of the IFN-beta signal pathway. Post-translationally, (Microbial infection) Cleaved by Seneca Valley virus protease 3C allowing the virus to suppress interferon type-I through both RIG-I and Toll-like receptor-dependent pathways. In terms of tissue distribution, ubiquitous.

Its subcellular location is the cytoplasm. In terms of biological role, adapter protein involved in I-kappa-B-kinase (IKK) regulation which constitutively binds TBK1 and IKBKE playing a role in antiviral innate immunity. Acts as a regulator of TRAF function by maintaining them in a latent state. Blocks TRAF2 binding to LMP1 and inhibits LMP1-mediated NF-kappa-B activation. Negatively regulates NF-kappaB signaling and cell survival upon DNA damage. Plays a role as an adapter to assemble ZC3H12A, USP10 in a deubiquitination complex which plays a negative feedback response to attenuate NF-kappaB activation through the deubiquitination of IKBKG or TRAF6 in response to interleukin-1-beta (IL1B) stimulation or upon DNA damage. Promotes UBP10-induced deubiquitination of TRAF6 in response to DNA damage. May control negatively TRAF2-mediated NF-kappa-B activation signaled by CD40, TNFR1 and TNFR2. In Homo sapiens (Human), this protein is TRAF family member-associated NF-kappa-B activator (TANK).